The sequence spans 422 residues: Cysteate synthase (422 aa).

An N6-(pyridoxal phosphate)lysine modification is found at Lys-105. Pyridoxal 5'-phosphate is bound by residues Asn-131 and Thr-379.

Belongs to the threonine synthase family. Cysteate synthase subfamily. In terms of assembly, homotrimer. The cofactor is pyridoxal 5'-phosphate.

It carries out the reaction O-phospho-L-serine + sulfite + H(+) = L-cysteate + phosphate. It functions in the pathway cofactor biosynthesis; coenzyme M biosynthesis. In terms of biological role, specifically catalyzes the beta-elimination of phosphate from L-phosphoserine and the beta-addition of sulfite to the dehydroalanine intermediate to produce L-cysteate. This Methanospirillum hungatei JF-1 (strain ATCC 27890 / DSM 864 / NBRC 100397 / JF-1) protein is Cysteate synthase.